Reading from the N-terminus, the 274-residue chain is Chromatin modification-related protein YNG2 (274 aa).

The interval 121-194 is disordered; that stretch reads EDEMESGPDF…ASTEREGTLD (74 aa). Residues 166–180 show a composition bias toward basic and acidic residues; the sequence is THREKSYNKGDDTAD. The PHD-type zinc finger occupies 215–264; that stretch reads NLYCFCQRVSFGEMVACDGPNCKYEWFHYECVNLTEPPKGTWYCPDCKQE. Positions 218, 220, 231, 236, 242, 245, 258, and 261 each coordinate Zn(2+).

This sequence belongs to the ING family. Interacts with H3K4me3 and to a lesser extent with H3K4me2. Component of the NuA4 histone acetyltransferase complex.

It localises to the nucleus. Component of the NuA4 histone acetyltransferase complex which is involved in transcriptional activation of selected genes principally by acetylation of nucleosomal histone H4 and H2A. The NuA4 complex is also involved in DNA repair. Involved in cell cycle progression and meiosis. The sequence is that of Chromatin modification-related protein YNG2 (YNG2) from Candida glabrata (strain ATCC 2001 / BCRC 20586 / JCM 3761 / NBRC 0622 / NRRL Y-65 / CBS 138) (Yeast).